Here is a 380-residue protein sequence, read N- to C-terminus: Queuine tRNA-ribosyltransferase (380 aa).

D96 serves as the catalytic Proton acceptor. Substrate is bound by residues 96–100, D150, Q193, and G220; that span reads DSGGF. An RNA binding region spans residues 251 to 257; it reads GVGAPDS. Catalysis depends on D270, which acts as the Nucleophile. The RNA binding; important for wobble base 34 recognition stretch occupies residues 275-279; it reads TRIAR. Zn(2+) contacts are provided by C308, C310, C313, and H339.

Belongs to the queuine tRNA-ribosyltransferase family. As to quaternary structure, homodimer. Within each dimer, one monomer is responsible for RNA recognition and catalysis, while the other monomer binds to the replacement base PreQ1. Zn(2+) is required as a cofactor.

The catalysed reaction is 7-aminomethyl-7-carbaguanine + guanosine(34) in tRNA = 7-aminomethyl-7-carbaguanosine(34) in tRNA + guanine. It functions in the pathway tRNA modification; tRNA-queuosine biosynthesis. Its function is as follows. Catalyzes the base-exchange of a guanine (G) residue with the queuine precursor 7-aminomethyl-7-deazaguanine (PreQ1) at position 34 (anticodon wobble position) in tRNAs with GU(N) anticodons (tRNA-Asp, -Asn, -His and -Tyr). Catalysis occurs through a double-displacement mechanism. The nucleophile active site attacks the C1' of nucleotide 34 to detach the guanine base from the RNA, forming a covalent enzyme-RNA intermediate. The proton acceptor active site deprotonates the incoming PreQ1, allowing a nucleophilic attack on the C1' of the ribose to form the product. After dissociation, two additional enzymatic reactions on the tRNA convert PreQ1 to queuine (Q), resulting in the hypermodified nucleoside queuosine (7-(((4,5-cis-dihydroxy-2-cyclopenten-1-yl)amino)methyl)-7-deazaguanosine). The sequence is that of Queuine tRNA-ribosyltransferase from Streptococcus equi subsp. zooepidemicus (strain H70).